The sequence spans 298 residues: MESFQKVEKIGEGTYGVVYKAKNKVTGETVALKKIRLDTETEGVPSTAIREISLLKELNHPNIVKLHDVIHTENKLYLVFEFLHQDLKRFMDSSTVTGISLPLVKSYLFQLLQGLAFCHSHRVLHRDLKPQNLLINAQGEIKLADFGLARAFGVPVRTYTHEVVTLWYRAPEILLGCKYYSTAVDIWSLGCIFAEMITRKALFPGDSEIDQLFRIFRTLGTPDESIWPGVTSMPDYKPSFPKWARQDLSKVVPPLDEDGRDLLGQMLIYDPNKRISAKNALVHRFFRDVTMPVPPLRL.

A Protein kinase domain is found at 4 to 286; sequence FQKVEKIGEG…AKNALVHRFF (283 aa). Residues 10–18, lysine 33, 81–83, and aspartate 86 each bind ATP; these read IGEGTYGVV and EFL. At threonine 14 the chain carries Phosphothreonine. Tyrosine 15 is modified (phosphotyrosine). Aspartate 127 (proton acceptor) is an active-site residue. ATP is bound by residues 129-132 and aspartate 145; that span reads KPQN. Threonine 160 bears the Phosphothreonine; by CAK mark.

It belongs to the protein kinase superfamily. CMGC Ser/Thr protein kinase family. CDC2/CDKX subfamily.

It catalyses the reaction L-seryl-[protein] + ATP = O-phospho-L-seryl-[protein] + ADP + H(+). It carries out the reaction L-threonyl-[protein] + ATP = O-phospho-L-threonyl-[protein] + ADP + H(+). Its activity is regulated as follows. Phosphorylation at Thr-14 or Tyr-15 inactivates the enzyme, while phosphorylation at Thr-160 activates it. Serine/threonine-protein kinase involved in the control of the cell cycle; essential for meiosis, but dispensable for mitosis. Triggers duplication of centrosomes and DNA. Acts at the G1-S transition to promote the E2F transcriptional program and the initiation of DNA synthesis, and modulates G2 progression; controls the timing of entry into mitosis/meiosis by controlling the subsequent activation of cyclin B/CDK1 by phosphorylation, and coordinates the activation of cyclin B/CDK1 at the centrosome and in the nucleus. Crucial role in orchestrating a fine balance between cellular proliferation, cell death, and DNA repair in embryonic stem cells (ESCs). Activity of CDK2 is maximal during S phase and G2; activated by interaction with cyclin E during the early stages of DNA synthesis to permit G1-S transition, and subsequently activated by cyclin A2 (cyclin A1 in germ cells) during the late stages of DNA replication to drive the transition from S phase to mitosis, the G2 phase. In Carassius auratus (Goldfish), this protein is Cyclin-dependent kinase 2 (cdk2).